The primary structure comprises 106 residues: Large ribosomal subunit protein eL34 (106 aa).

Belongs to the eukaryotic ribosomal protein eL34 family.

This chain is Large ribosomal subunit protein eL34, found in Hyperthermus butylicus (strain DSM 5456 / JCM 9403 / PLM1-5).